Consider the following 360-residue polypeptide: DNA replication and repair protein RecF (360 aa).

33 to 40 is an ATP binding site; the sequence is GENGSGKT.

This sequence belongs to the RecF family.

Its subcellular location is the cytoplasm. Functionally, the RecF protein is involved in DNA metabolism; it is required for DNA replication and normal SOS inducibility. RecF binds preferentially to single-stranded, linear DNA. It also seems to bind ATP. The sequence is that of DNA replication and repair protein RecF from Rickettsia rickettsii (strain Iowa).